The following is a 345-amino-acid chain: Histidinol-phosphate aminotransferase (345 aa).

Lys205 is modified (N6-(pyridoxal phosphate)lysine).

The protein belongs to the class-II pyridoxal-phosphate-dependent aminotransferase family. Histidinol-phosphate aminotransferase subfamily. As to quaternary structure, homodimer. Pyridoxal 5'-phosphate is required as a cofactor.

The enzyme catalyses L-histidinol phosphate + 2-oxoglutarate = 3-(imidazol-4-yl)-2-oxopropyl phosphate + L-glutamate. The protein operates within amino-acid biosynthesis; L-histidine biosynthesis; L-histidine from 5-phospho-alpha-D-ribose 1-diphosphate: step 7/9. The protein is Histidinol-phosphate aminotransferase of Parabacteroides distasonis (strain ATCC 8503 / DSM 20701 / CIP 104284 / JCM 5825 / NCTC 11152).